A 346-amino-acid chain; its full sequence is Cell division protein ZipA (346 aa).

Residues 1–6 (MEDLQL) are Periplasmic-facing. A helical transmembrane segment spans residues 7-27 (VLFVLGAIAIVAVLVHGFWSI). Residues 28–346 (RRQQPKSLKD…DYLHRIRANA (319 aa)) lie on the Cytoplasmic side of the membrane. 2 disordered regions span residues 76-103 (ANEA…QPVE) and 121-145 (QPDF…RQEP).

Belongs to the ZipA family. Interacts with FtsZ via their C-terminal domains.

It is found in the cell inner membrane. In terms of biological role, essential cell division protein that stabilizes the FtsZ protofilaments by cross-linking them and that serves as a cytoplasmic membrane anchor for the Z ring. Also required for the recruitment to the septal ring of downstream cell division proteins. The polypeptide is Cell division protein ZipA (Shewanella sp. (strain MR-7)).